The chain runs to 212 residues: uncharacterized protein (212 aa).

S-adenosyl-L-methionine-binding residues include glycine 53, glutamate 74, and aspartate 97.

Belongs to the methyltransferase superfamily. YrrT family.

Could be a S-adenosyl-L-methionine-dependent methyltransferase. This is an uncharacterized protein from Bacillus cereus (strain 03BB102).